The primary structure comprises 231 residues: MKVVIVTSVASLLDASIQFQKTACRHHCNYLSMQIVKEIEEFGTINEKNLEFATWKDVIQNDEIDALVFYRVKQISISTGVLYESMMRNRTKPISMFFVRDCLAFDGDPPSFRMTSCNINAYNRNKIKDLIILMNMKTCNKKIIGEFIIDNFGSVNALLSIINSNVTWVTSVINNSNGRGINIRVSNNKMLTITSFRRFVNKLKMYKTTKCASQLDNLCTEINKMDIIDKK.

This sequence belongs to the orthopoxvirus OPG058 family.

Its subcellular location is the host nucleus. It localises to the host nucleolus. The chain is Protein OPG061 (OPG061) from Variola virus.